The chain runs to 313 residues: Flagellin (313 aa).

Coiled-coil stretches lie at residues 5–33 (INTNDSALLAQNNLTKSKGILGSAIERLS) and 97–117 (VQSENGSNSKSDLDSIQKEVT). 4 tandem repeats follow at residues 179 to 197 (KEAVAAKPAVPAQPAVPAD), 199 to 217 (KNGVAAKPAVPAQPEVKAQ), 255 to 259 (VNNLN), and 262 to 266 (VNNLS). The tract at residues 179–217 (KEAVAAKPAVPAQPAVPADPKNGVAAKPAVPAQPEVKAQ) is 2 X 19 AA approximate tandem repeats. The segment covering 190–199 (AQPAVPADPK) has biased composition (low complexity). The interval 190–211 (AQPAVPADPKNGVAAKPAVPAQ) is disordered. The stretch at 252–298 (ESTVNNLNNTVNNLSAARSRIEDADYAVEVSNMSRGQILQQAGTSVL) forms a coiled coil. The interval 255-266 (VNNLNNTVNNLS) is 2 X 5 AA approximate repeats of V-N-N-L-N.

This sequence belongs to the bacterial flagellin family.

The protein resides in the secreted. The protein localises to the bacterial flagellum. In terms of biological role, flagellin is the subunit protein which polymerizes to form the filaments of bacterial flagella. The polypeptide is Flagellin (fliC) (Xenorhabdus nematophila (Achromobacter nematophilus)).